The following is a 102-amino-acid chain: RNA-binding protein Hfq (102 aa).

Residues 9-68 form the Sm domain; it reads DPFLNALRRERVPVSIYLVNGIKLQGQIESFDQFVILLKNTVSQMVYKHAISTVVPSRPV. Residues 65-102 form a disordered region; it reads SRPVSHHSSNTSVGASVGNYHSGGVSAPAAQQESDGTE. The segment covering 93–102 has biased composition (polar residues); the sequence is AAQQESDGTE.

It belongs to the Hfq family. As to quaternary structure, homohexamer.

In terms of biological role, RNA chaperone that binds small regulatory RNA (sRNAs) and mRNAs to facilitate mRNA translational regulation in response to envelope stress, environmental stress and changes in metabolite concentrations. Also binds with high specificity to tRNAs. The sequence is that of RNA-binding protein Hfq from Photorhabdus laumondii subsp. laumondii (strain DSM 15139 / CIP 105565 / TT01) (Photorhabdus luminescens subsp. laumondii).